A 334-amino-acid chain; its full sequence is Glycerol-3-phosphate dehydrogenase [NAD(P)+] 2 (334 aa).

Residues tryptophan 16, arginine 36, arginine 37, and lysine 110 each coordinate NADPH. Residues lysine 110 and glycine 140 each contribute to the sn-glycerol 3-phosphate site. Alanine 144 serves as a coordination point for NADPH. 5 residues coordinate sn-glycerol 3-phosphate: lysine 195, aspartate 248, serine 258, arginine 259, and asparagine 260. Lysine 195 acts as the Proton acceptor in catalysis. Arginine 259 contacts NADPH. Residues valine 282 and glutamate 284 each coordinate NADPH.

This sequence belongs to the NAD-dependent glycerol-3-phosphate dehydrogenase family.

Its subcellular location is the cytoplasm. It catalyses the reaction sn-glycerol 3-phosphate + NAD(+) = dihydroxyacetone phosphate + NADH + H(+). The enzyme catalyses sn-glycerol 3-phosphate + NADP(+) = dihydroxyacetone phosphate + NADPH + H(+). Its pathway is membrane lipid metabolism; glycerophospholipid metabolism. Catalyzes the reduction of the glycolytic intermediate dihydroxyacetone phosphate (DHAP) to sn-glycerol 3-phosphate (G3P), the key precursor for phospholipid synthesis. The polypeptide is Glycerol-3-phosphate dehydrogenase [NAD(P)+] 2 (Mycobacterium bovis (strain ATCC BAA-935 / AF2122/97)).